The chain runs to 871 residues: Protein translocase subunit SecA (871 aa).

ATP-binding positions include Gln80, 98-102 (GEGKT), and Asp537.

It belongs to the SecA family. As to quaternary structure, monomer and homodimer. Part of the essential Sec protein translocation apparatus which comprises SecA, SecYEG and auxiliary proteins SecDF. Other proteins may also be involved. A single SecA monomer interacts with SecY in the channel.

The protein localises to the cell inner membrane. It localises to the cytoplasm. The enzyme catalyses ATP + H2O + cellular proteinSide 1 = ADP + phosphate + cellular proteinSide 2.. Functionally, part of the Sec protein translocase complex. Interacts with the SecYEG preprotein conducting channel. Has a central role in coupling the hydrolysis of ATP to the transfer of proteins into and across the cell membrane, serving as an ATP-driven molecular motor driving the stepwise translocation of polypeptide chains across the membrane. The sequence is that of Protein translocase subunit SecA from Thermotoga maritima (strain ATCC 43589 / DSM 3109 / JCM 10099 / NBRC 100826 / MSB8).